We begin with the raw amino-acid sequence, 157 residues long: SsrA-binding protein (157 aa).

It belongs to the SmpB family.

It localises to the cytoplasm. Required for rescue of stalled ribosomes mediated by trans-translation. Binds to transfer-messenger RNA (tmRNA), required for stable association of tmRNA with ribosomes. tmRNA and SmpB together mimic tRNA shape, replacing the anticodon stem-loop with SmpB. tmRNA is encoded by the ssrA gene; the 2 termini fold to resemble tRNA(Ala) and it encodes a 'tag peptide', a short internal open reading frame. During trans-translation Ala-aminoacylated tmRNA acts like a tRNA, entering the A-site of stalled ribosomes, displacing the stalled mRNA. The ribosome then switches to translate the ORF on the tmRNA; the nascent peptide is terminated with the 'tag peptide' encoded by the tmRNA and targeted for degradation. The ribosome is freed to recommence translation, which seems to be the essential function of trans-translation. The polypeptide is SsrA-binding protein (Elusimicrobium minutum (strain Pei191)).